A 134-amino-acid polypeptide reads, in one-letter code: Small ribosomal subunit protein uS12 (134 aa).

Residues 1-27 (MPTIQQLVRKGRESFADKSKSPALNSC) are disordered. Basic and acidic residues predominate over residues 10 to 20 (KGRESFADKSK). Aspartate 89 is subject to 3-methylthioaspartic acid. The interval 103–134 (DTAGVNGRTQRRSKYGAKRPKPGQAPAAKGKK) is disordered. Over residues 111–123 (TQRRSKYGAKRPK) the composition is skewed to basic residues. Low complexity predominate over residues 124-134 (PGQAPAAKGKK).

The protein belongs to the universal ribosomal protein uS12 family. Part of the 30S ribosomal subunit. Contacts proteins S8 and S17. May interact with IF1 in the 30S initiation complex.

Functionally, with S4 and S5 plays an important role in translational accuracy. Interacts with and stabilizes bases of the 16S rRNA that are involved in tRNA selection in the A site and with the mRNA backbone. Located at the interface of the 30S and 50S subunits, it traverses the body of the 30S subunit contacting proteins on the other side and probably holding the rRNA structure together. The combined cluster of proteins S8, S12 and S17 appears to hold together the shoulder and platform of the 30S subunit. This chain is Small ribosomal subunit protein uS12, found in Porphyromonas gingivalis (strain ATCC 33277 / DSM 20709 / CIP 103683 / JCM 12257 / NCTC 11834 / 2561).